A 315-amino-acid chain; its full sequence is Aspartate carbamoyltransferase catalytic subunit (315 aa).

The carbamoyl phosphate site is built by Arg-65 and Thr-66. Position 93 (Lys-93) interacts with L-aspartate. The carbamoyl phosphate site is built by Arg-115, His-143, and Gln-146. Residues Arg-176 and Arg-231 each coordinate L-aspartate. Gly-272 and Pro-273 together coordinate carbamoyl phosphate.

Belongs to the aspartate/ornithine carbamoyltransferase superfamily. ATCase family. As to quaternary structure, heterododecamer (2C3:3R2) of six catalytic PyrB chains organized as two trimers (C3), and six regulatory PyrI chains organized as three dimers (R2).

It catalyses the reaction carbamoyl phosphate + L-aspartate = N-carbamoyl-L-aspartate + phosphate + H(+). It participates in pyrimidine metabolism; UMP biosynthesis via de novo pathway; (S)-dihydroorotate from bicarbonate: step 2/3. Its function is as follows. Catalyzes the condensation of carbamoyl phosphate and aspartate to form carbamoyl aspartate and inorganic phosphate, the committed step in the de novo pyrimidine nucleotide biosynthesis pathway. This Hyphomonas neptunium (strain ATCC 15444) protein is Aspartate carbamoyltransferase catalytic subunit.